Reading from the N-terminus, the 455-residue chain is Bifunctional protein GlmU (455 aa).

The pyrophosphorylase stretch occupies residues 1 to 232; that stretch reads MASITGALIL…DPNLLGVNDP (232 aa). UDP-N-acetyl-alpha-D-glucosamine is bound by residues 10–13, Lys-24, Gln-75, and 80–81; these read LAAG and GT. Position 106 (Asp-106) interacts with Mg(2+). 4 residues coordinate UDP-N-acetyl-alpha-D-glucosamine: Gly-141, Glu-155, Asn-172, and Asn-230. Asn-230 serves as a coordination point for Mg(2+). The segment at 233 to 253 is linker; sequence AELIRSEALVRARIALNWIEK. Residues 254 to 455 form an N-acetyltransferase region; sequence RVLIHAPETV…QTTLPRRRNS (202 aa). Residues Arg-336 and Lys-354 each contribute to the UDP-N-acetyl-alpha-D-glucosamine site. His-366 functions as the Proton acceptor in the catalytic mechanism. Positions 369 and 380 each coordinate UDP-N-acetyl-alpha-D-glucosamine. Acetyl-CoA is bound by residues Ala-383, 389–390, Ser-408, Ala-426, and Arg-443; that span reads NY.

It in the N-terminal section; belongs to the N-acetylglucosamine-1-phosphate uridyltransferase family. In the C-terminal section; belongs to the transferase hexapeptide repeat family. Homotrimer. Mg(2+) is required as a cofactor.

Its subcellular location is the cytoplasm. The enzyme catalyses alpha-D-glucosamine 1-phosphate + acetyl-CoA = N-acetyl-alpha-D-glucosamine 1-phosphate + CoA + H(+). It carries out the reaction N-acetyl-alpha-D-glucosamine 1-phosphate + UTP + H(+) = UDP-N-acetyl-alpha-D-glucosamine + diphosphate. The protein operates within nucleotide-sugar biosynthesis; UDP-N-acetyl-alpha-D-glucosamine biosynthesis; N-acetyl-alpha-D-glucosamine 1-phosphate from alpha-D-glucosamine 6-phosphate (route II): step 2/2. Its pathway is nucleotide-sugar biosynthesis; UDP-N-acetyl-alpha-D-glucosamine biosynthesis; UDP-N-acetyl-alpha-D-glucosamine from N-acetyl-alpha-D-glucosamine 1-phosphate: step 1/1. It functions in the pathway bacterial outer membrane biogenesis; LPS lipid A biosynthesis. In terms of biological role, catalyzes the last two sequential reactions in the de novo biosynthetic pathway for UDP-N-acetylglucosamine (UDP-GlcNAc). The C-terminal domain catalyzes the transfer of acetyl group from acetyl coenzyme A to glucosamine-1-phosphate (GlcN-1-P) to produce N-acetylglucosamine-1-phosphate (GlcNAc-1-P), which is converted into UDP-GlcNAc by the transfer of uridine 5-monophosphate (from uridine 5-triphosphate), a reaction catalyzed by the N-terminal domain. This Nitratidesulfovibrio vulgaris (strain DSM 19637 / Miyazaki F) (Desulfovibrio vulgaris) protein is Bifunctional protein GlmU.